A 329-amino-acid chain; its full sequence is DNA-directed RNA polymerase subunit alpha (329 aa).

Residues 1–234 (MQGSVTEFLK…EQLDAFVELR (234 aa)) are alpha N-terminal domain (alpha-NTD). The alpha C-terminal domain (alpha-CTD) stretch occupies residues 248 to 329 (FDPILLRPVD…WPPASLADDL (82 aa)).

The protein belongs to the RNA polymerase alpha chain family. As to quaternary structure, homodimer. The RNAP catalytic core consists of 2 alpha, 1 beta, 1 beta' and 1 omega subunit. When a sigma factor is associated with the core the holoenzyme is formed, which can initiate transcription.

It catalyses the reaction RNA(n) + a ribonucleoside 5'-triphosphate = RNA(n+1) + diphosphate. In terms of biological role, DNA-dependent RNA polymerase catalyzes the transcription of DNA into RNA using the four ribonucleoside triphosphates as substrates. In Shewanella sp. (strain ANA-3), this protein is DNA-directed RNA polymerase subunit alpha.